The chain runs to 121 residues: Large ribosomal subunit protein bL12 (121 aa).

It belongs to the bacterial ribosomal protein bL12 family. Homodimer. Part of the ribosomal stalk of the 50S ribosomal subunit. Forms a multimeric L10(L12)X complex, where L10 forms an elongated spine to which 2 to 4 L12 dimers bind in a sequential fashion. Binds GTP-bound translation factors.

Its function is as follows. Forms part of the ribosomal stalk which helps the ribosome interact with GTP-bound translation factors. Is thus essential for accurate translation. The chain is Large ribosomal subunit protein bL12 from Streptococcus equi subsp. equi (strain 4047).